Here is a 126-residue protein sequence, read N- to C-terminus: Anti-adapter protein IraD (126 aa).

The protein belongs to the GpW/Gp25 family. IraD subfamily. As to quaternary structure, interacts with RssB.

The protein localises to the cytoplasm. Functionally, inhibits RpoS proteolysis by regulating RssB activity, thereby increasing the stability of the sigma stress factor RpoS during oxidative stress. Its effect on RpoS stability is due to its interaction with RssB, which probably blocks the interaction of RssB with RpoS, and the consequent delivery of the RssB-RpoS complex to the ClpXP protein degradation pathway. This Salmonella arizonae (strain ATCC BAA-731 / CDC346-86 / RSK2980) protein is Anti-adapter protein IraD.